The following is a 116-amino-acid chain: Large ribosomal subunit protein bL19 (116 aa).

The protein belongs to the bacterial ribosomal protein bL19 family.

Its function is as follows. This protein is located at the 30S-50S ribosomal subunit interface and may play a role in the structure and function of the aminoacyl-tRNA binding site. The protein is Large ribosomal subunit protein bL19 of Magnetococcus marinus (strain ATCC BAA-1437 / JCM 17883 / MC-1).